The chain runs to 848 residues: Translation initiation factor IF-2 (848 aa).

Positions 1-10 (MSENNNDKIT) are enriched in basic and acidic residues. Disordered regions lie at residues 1–79 (MSEN…EKPV) and 121–163 (AERQ…LFSS). Residues 17–33 (LKRSGSETNTVKQNFNH) show a composition bias toward polar residues. Positions 121-138 (AERQAAEKQAKESEEGLH) are enriched in basic and acidic residues. Residues 149 to 163 (KSSSNTTKPTPLFSS) are compositionally biased toward polar residues. Residues 346 to 513 (TRPPIVTIMG…AILLQAEILD (168 aa)) form the tr-type G domain. The interval 355–362 (GHVDHGKT) is G1. 355–362 (GHVDHGKT) provides a ligand contact to GTP. The G2 stretch occupies residues 380–384 (GITQH). The segment at 401-404 (DTPG) is G3. GTP-binding positions include 401–405 (DTPGH) and 455–458 (NKID). The tract at residues 455 to 458 (NKID) is G4. The interval 491–493 (SAK) is G5.

It belongs to the TRAFAC class translation factor GTPase superfamily. Classic translation factor GTPase family. IF-2 subfamily.

Its subcellular location is the cytoplasm. One of the essential components for the initiation of protein synthesis. Protects formylmethionyl-tRNA from spontaneous hydrolysis and promotes its binding to the 30S ribosomal subunits. Also involved in the hydrolysis of GTP during the formation of the 70S ribosomal complex. The polypeptide is Translation initiation factor IF-2 (Bartonella bacilliformis (strain ATCC 35685 / KC583 / Herrer 020/F12,63)).